Here is a 659-residue protein sequence, read N- to C-terminus: DNA helicase/primase complex-associated protein (659 aa).

Belongs to the herpesviridae HEPA family. Associates with the primase and the helicase to form the helicase-primase complex. Interacts with the origin-binding protein. Interacts with the polymerase catalytic subunit.

The protein resides in the host nucleus. Its function is as follows. Component of the helicase/primase complex. Unwinds the DNA at the replication forks and generates single-stranded DNA for both leading and lagging strand synthesis. The primase synthesizes short RNA primers on the lagging strand that the polymerase presumably elongates using dNTPs. The primase-associated factor has no known catalytic activity in the complex and may serve to facilitate the formation of the replisome by directly interacting with the origin-binding protein and the polymerase. This is DNA helicase/primase complex-associated protein (U74) from Human herpesvirus 7 (strain JI) (HHV-7).